A 66-amino-acid polypeptide reads, in one-letter code: U-scoloptoxin(04)-Ssd2a (66 aa).

The signal sequence occupies residues 1–19 (MKAIYILSVLLLMMLPILS).

It belongs to the scoloptoxin-04 family. In terms of processing, contains 2 disulfide bonds. Expressed by the venom gland.

The protein resides in the secreted. This is U-scoloptoxin(04)-Ssd2a from Scolopendra dehaani (Thai centipede).